Reading from the N-terminus, the 235-residue chain is Probable flavin-dependent thymidylate synthase (235 aa).

Positions 1–229 constitute a ThyX domain; it reads MKVQLIASTI…PNTYQDIPTE (229 aa). FAD-binding positions include serine 70 and 93-95; that span reads RHR. DUMP contacts are provided by residues 90 to 93, 103 to 105, and arginine 168; these read ELER and SQR. Residues 93 to 103 carry the ThyX motif motif; it reads RHRHLSFSVVS. Residue 184–186 participates in FAD binding; sequence NHR. Arginine 195 contacts dUMP. The Involved in ionization of N3 of dUMP, leading to its activation role is filled by arginine 195.

This sequence belongs to the thymidylate synthase ThyX family. In terms of assembly, homotetramer. It depends on FAD as a cofactor.

The enzyme catalyses dUMP + (6R)-5,10-methylene-5,6,7,8-tetrahydrofolate + NADPH + H(+) = dTMP + (6S)-5,6,7,8-tetrahydrofolate + NADP(+). Its pathway is pyrimidine metabolism; dTTP biosynthesis. Catalyzes the reductive methylation of 2'-deoxyuridine-5'-monophosphate (dUMP) to 2'-deoxythymidine-5'-monophosphate (dTMP) while utilizing 5,10-methylenetetrahydrofolate (mTHF) as the methyl donor, and NADPH and FADH(2) as the reductant. The chain is Probable flavin-dependent thymidylate synthase (48) from Mycobacterium (Mycobacteriophage D29).